The following is a 436-amino-acid chain: Xylose isomerase (436 aa).

Residues H100 and D103 contribute to the active site. Residues E231, E267, H270, D295, D306, D308, and D338 each contribute to the Mg(2+) site.

The protein belongs to the xylose isomerase family. Homotetramer. Mg(2+) is required as a cofactor.

Its subcellular location is the cytoplasm. It carries out the reaction alpha-D-xylose = alpha-D-xylulofuranose. The protein is Xylose isomerase of Rhizobium johnstonii (strain DSM 114642 / LMG 32736 / 3841) (Rhizobium leguminosarum bv. viciae).